We begin with the raw amino-acid sequence, 112 residues long: Large ribosomal subunit protein eL36y (112 aa).

A compositionally biased stretch (basic residues) spans 79–88 (KLGTHKRAKR). The tract at residues 79–112 (KLGTHKRAKRKREEMSSVLRKMRSGGGGATEKKK) is disordered. The segment covering 102 to 112 (SGGGGATEKKK) has biased composition (gly residues).

The protein belongs to the eukaryotic ribosomal protein eL36 family.

This is Large ribosomal subunit protein eL36y (RPL36B) from Arabidopsis thaliana (Mouse-ear cress).